The chain runs to 559 residues: Branched-chain-amino-acid aminotransferase-like protein 2 (559 aa).

The protein belongs to the class-IV pyridoxal-phosphate-dependent aminotransferase family.

This is Branched-chain-amino-acid aminotransferase-like protein 2 from Arabidopsis thaliana (Mouse-ear cress).